Reading from the N-terminus, the 538-residue chain is Frizzled-4 (538 aa).

The N-terminal stretch at 1-37 is a signal peptide; it reads MAWQGTGPSVRGMPGGVRLRLGLLLLQLLLLQRPALG. The Extracellular segment spans residues 38–213; the sequence is FGDEEERRCD…KCGYDAGLYS (176 aa). Residues 41 to 162 enclose the FZ domain; the sequence is EEERRCDPIR…NDHNHMCMEG (122 aa). 8 cysteine pairs are disulfide-bonded: Cys46–Cys107, Cys54–Cys100, Cys91–Cys129, Cys118–Cys159, Cys122–Cys146, Cys182–Cys201, Cys205–Cys283, and Cys303–Cys378. Asn60 carries an N-linked (GlcNAc...) asparagine glycan. Residue Asn145 is glycosylated (N-linked (GlcNAc...) asparagine). Residues 214–244 form a helical membrane-spanning segment; that stretch reads RSAKEFTDIWMAVWASLCFISTTFTVLTFLI. Topologically, residues 245–250 are cytoplasmic; it reads DSSRFS. A helical membrane pass occupies residues 251-276; sequence YPERPIIFLSMCYNIYSIAYIVRLTV. Residues 277 to 300 are Extracellular-facing; the sequence is GRERISCDFEEAAEPVLIQEGLKN. The chain crosses the membrane as a helical span at residues 301-334; it reads TGCAIIFLLMYFFGMASSIWWVILTLTWFLAAGL. At 335–337 the chain is on the cytoplasmic side; that stretch reads KWG. Residues 338–366 traverse the membrane as a helical segment; it reads HEAIEMHSSYFHIAAWAIPAVKTIVILIM. Residues 367 to 384 are Extracellular-facing; it reads RLVDADELTGLCYVGNQS. Asn382 is a glycosylation site (N-linked (GlcNAc...) asparagine). The helical transmembrane segment at 385 to 419 threads the bilayer; the sequence is LDALTGFVVAPLFTYLVIGTLFIAAGLVALFKIRS. The Cytoplasmic portion of the chain corresponds to 420 to 432; the sequence is NLQKDGTKTDKLE. The helical transmembrane segment at 433 to 461 threads the bilayer; that stretch reads RLMVKIGVFSVLYTVPATCVIACYFYEIS. Residues 462–474 lie on the Extracellular side of the membrane; it reads NWALFRYSADDSN. The chain crosses the membrane as a helical span at residues 475-496; it reads MAVEMLKIFMSLLVGITSGMWI. Topologically, residues 497–538 are cytoplasmic; that stretch reads WSAKTLHTWQKCSNRLVNSGKVKREKRGNGWVKPGKGNETVV. A Lys-Thr-X-X-X-Trp motif, mediates interaction with the PDZ domain of Dvl family members motif is present at residues 500–505; it reads KTLHTW. The PDZ-binding signature appears at 536 to 538; it reads TVV.

This sequence belongs to the G-protein coupled receptor Fz/Smo family. In terms of assembly, interacts with MAGI3 and NDP. Component of a complex, at least composed of TSPAN12, FZD4 and norrin (NDP). Interacts (via FZ domain) with TSKU; TSKU competes with WNT2B for binding to FZD4, inhibiting Wnt signaling and repressing peripheral eye development. Interacts with glypican GPC3. In terms of processing, ubiquitinated by ZNRF3, leading to its degradation by the proteasome.

The protein localises to the cell membrane. Receptor for Wnt proteins. Most of frizzled receptors are coupled to the beta-catenin (CTNNB1) canonical signaling pathway, which leads to the activation of disheveled proteins, inhibition of GSK-3 kinase, nuclear accumulation of beta-catenin (CTNNB1) and activation of Wnt target genes. Plays a critical role in retinal vascularization by acting as a receptor for Wnt proteins and norrin (NDP). In retina, it can be both activated by Wnt protein-binding, but also by a Wnt-independent signaling via binding of norrin (NDP), promoting in both cases beta-catenin (CTNNB1) accumulation and stimulation of LEF/TCF-mediated transcriptional programs. A second signaling pathway involving PKC and calcium fluxes has been seen for some family members, but it is not yet clear if it represents a distinct pathway or if it can be integrated in the canonical pathway, as PKC seems to be required for Wnt-mediated inactivation of GSK-3 kinase. Both pathways seem to involve interactions with G-proteins. May be involved in transduction and intercellular transmission of polarity information during tissue morphogenesis and/or in differentiated tissues. In Rattus norvegicus (Rat), this protein is Frizzled-4 (Fzd4).